A 129-amino-acid chain; its full sequence is Large ribosomal subunit protein bL17 (129 aa).

The protein belongs to the bacterial ribosomal protein bL17 family. Part of the 50S ribosomal subunit. Contacts protein L32.

The chain is Large ribosomal subunit protein bL17 from Hahella chejuensis (strain KCTC 2396).